The following is a 33-amino-acid chain: Photosystem II reaction center protein Psb30 (33 aa).

Residues 5 to 25 (VIAQLTMLTIAVITGPLVIFF) form a helical membrane-spanning segment.

Belongs to the Psb30/Ycf12 family. In terms of assembly, PSII is composed of 1 copy each of membrane proteins PsbA, PsbB, PsbC, PsbD, PsbE, PsbF, PsbH, PsbI, PsbJ, PsbK, PsbL, PsbM, PsbT, PsbX, PsbY, PsbZ, Psb30/Ycf12, peripheral proteins of the oxygen-evolving complex and a large number of cofactors. It forms dimeric complexes.

It is found in the plastid. The protein localises to the chloroplast thylakoid membrane. Functionally, a core subunit of photosystem II (PSII), probably helps stabilize the reaction center. This Welwitschia mirabilis (Tree tumbo) protein is Photosystem II reaction center protein Psb30.